The chain runs to 1358 residues: DNA-directed RNA polymerase subunit beta (1358 aa).

It belongs to the RNA polymerase beta chain family. The RNAP catalytic core consists of 2 alpha, 1 beta, 1 beta' and 1 omega subunit. When a sigma factor is associated with the core the holoenzyme is formed, which can initiate transcription.

The enzyme catalyses RNA(n) + a ribonucleoside 5'-triphosphate = RNA(n+1) + diphosphate. DNA-dependent RNA polymerase catalyzes the transcription of DNA into RNA using the four ribonucleoside triphosphates as substrates. This chain is DNA-directed RNA polymerase subunit beta, found in Francisella tularensis subsp. holarctica (strain OSU18).